Reading from the N-terminus, the 295-residue chain is Pyridoxal 5'-phosphate synthase subunit PdxS (295 aa).

Residue D25 participates in D-ribose 5-phosphate binding. K82 functions as the Schiff-base intermediate with D-ribose 5-phosphate in the catalytic mechanism. G154 is a D-ribose 5-phosphate binding site. A D-glyceraldehyde 3-phosphate-binding site is contributed by R166. D-ribose 5-phosphate-binding positions include G215 and 236–237; that span reads GS.

It belongs to the PdxS/SNZ family. As to quaternary structure, in the presence of PdxT, forms a dodecamer of heterodimers.

The enzyme catalyses aldehydo-D-ribose 5-phosphate + D-glyceraldehyde 3-phosphate + L-glutamine = pyridoxal 5'-phosphate + L-glutamate + phosphate + 3 H2O + H(+). It participates in cofactor biosynthesis; pyridoxal 5'-phosphate biosynthesis. Catalyzes the formation of pyridoxal 5'-phosphate from ribose 5-phosphate (RBP), glyceraldehyde 3-phosphate (G3P) and ammonia. The ammonia is provided by the PdxT subunit. Can also use ribulose 5-phosphate and dihydroxyacetone phosphate as substrates, resulting from enzyme-catalyzed isomerization of RBP and G3P, respectively. The chain is Pyridoxal 5'-phosphate synthase subunit PdxS from Bacillus cereus (strain B4264).